The chain runs to 126 residues: Phosphoribosyl-AMP cyclohydrolase (126 aa).

D76 lines the Mg(2+) pocket. C77 is a Zn(2+) binding site. The Mg(2+) site is built by D78 and D80. The Zn(2+) site is built by C94 and C101.

This sequence belongs to the PRA-CH family. As to quaternary structure, homodimer. Requires Mg(2+) as cofactor. The cofactor is Zn(2+).

Its subcellular location is the cytoplasm. It carries out the reaction 1-(5-phospho-beta-D-ribosyl)-5'-AMP + H2O = 1-(5-phospho-beta-D-ribosyl)-5-[(5-phospho-beta-D-ribosylamino)methylideneamino]imidazole-4-carboxamide. The protein operates within amino-acid biosynthesis; L-histidine biosynthesis; L-histidine from 5-phospho-alpha-D-ribose 1-diphosphate: step 3/9. In terms of biological role, catalyzes the hydrolysis of the adenine ring of phosphoribosyl-AMP. This is Phosphoribosyl-AMP cyclohydrolase from Ruthia magnifica subsp. Calyptogena magnifica.